We begin with the raw amino-acid sequence, 232 residues long: Aliphatic sulfonates import ATP-binding protein SsuB 2 (232 aa).

The ABC transporter domain maps to 1–216 (MDIRVDRKAF…PRDRRDPLLA (216 aa)). Residue 33–40 (GPSGCGKS) coordinates ATP.

Belongs to the ABC transporter superfamily. Aliphatic sulfonates importer (TC 3.A.1.17.2) family. The complex is composed of two ATP-binding proteins (SsuB), two transmembrane proteins (SsuC) and a solute-binding protein (SsuA).

The protein localises to the cell inner membrane. The enzyme catalyses ATP + H2O + aliphatic sulfonate-[sulfonate-binding protein]Side 1 = ADP + phosphate + aliphatic sulfonateSide 2 + [sulfonate-binding protein]Side 1.. In terms of biological role, part of the ABC transporter complex SsuABC involved in aliphatic sulfonates import. Responsible for energy coupling to the transport system. The protein is Aliphatic sulfonates import ATP-binding protein SsuB 2 of Pseudomonas syringae pv. tomato (strain ATCC BAA-871 / DC3000).